A 362-amino-acid chain; its full sequence is Phosphoserine aminotransferase (362 aa).

L-glutamate-binding residues include Ser-9 and Arg-42. Pyridoxal 5'-phosphate contacts are provided by residues 76-77, Trp-102, Thr-153, Asp-174, and Gln-197; that span reads GR. N6-(pyridoxal phosphate)lysine is present on Lys-198. A pyridoxal 5'-phosphate-binding site is contributed by 239 to 240; that stretch reads NT.

It belongs to the class-V pyridoxal-phosphate-dependent aminotransferase family. SerC subfamily. As to quaternary structure, homodimer. The cofactor is pyridoxal 5'-phosphate.

The protein resides in the cytoplasm. The enzyme catalyses O-phospho-L-serine + 2-oxoglutarate = 3-phosphooxypyruvate + L-glutamate. It carries out the reaction 4-(phosphooxy)-L-threonine + 2-oxoglutarate = (R)-3-hydroxy-2-oxo-4-phosphooxybutanoate + L-glutamate. It functions in the pathway amino-acid biosynthesis; L-serine biosynthesis; L-serine from 3-phospho-D-glycerate: step 2/3. Its pathway is cofactor biosynthesis; pyridoxine 5'-phosphate biosynthesis; pyridoxine 5'-phosphate from D-erythrose 4-phosphate: step 3/5. In terms of biological role, catalyzes the reversible conversion of 3-phosphohydroxypyruvate to phosphoserine and of 3-hydroxy-2-oxo-4-phosphonooxybutanoate to phosphohydroxythreonine. The chain is Phosphoserine aminotransferase from Salmonella agona (strain SL483).